We begin with the raw amino-acid sequence, 213 residues long: Protein brother (213 aa).

The disordered stretch occupies residues 189–213; it reads HTPQTPPEDHHHRGGPGLPRGPMGW. A compositionally biased stretch (gly residues) spans 203 to 213; that stretch reads GPGLPRGPMGW.

It belongs to the CBF-beta family.

It is found in the nucleus. Its function is as follows. Regulates the DNA-binding properties of Runt. The chain is Protein brother (Bro) from Drosophila melanogaster (Fruit fly).